The sequence spans 473 residues: Arginine biosynthesis bifunctional protein ArgJ, mitochondrial (473 aa).

Substrate contacts are provided by Thr-201, Lys-230, Thr-241, Glu-328, Asn-468, and Thr-473. The Nucleophile role is filled by Thr-241.

Belongs to the ArgJ family. As to quaternary structure, heterodimer of an alpha and a beta chain. The alpha and beta chains are autoproteolytically processed from a single precursor protein within the mitochondrion.

It is found in the mitochondrion matrix. It carries out the reaction N(2)-acetyl-L-ornithine + L-glutamate = N-acetyl-L-glutamate + L-ornithine. It catalyses the reaction L-glutamate + acetyl-CoA = N-acetyl-L-glutamate + CoA + H(+). The protein operates within amino-acid biosynthesis; L-arginine biosynthesis; L-ornithine and N-acetyl-L-glutamate from L-glutamate and N(2)-acetyl-L-ornithine (cyclic): step 1/1. It functions in the pathway amino-acid biosynthesis; L-arginine biosynthesis; N(2)-acetyl-L-ornithine from L-glutamate: step 1/4. In terms of biological role, catalyzes two activities which are involved in the cyclic version of arginine biosynthesis: the synthesis of acetylglutamate from glutamate and acetyl-CoA, and of ornithine by transacetylation between acetylornithine and glutamate. The sequence is that of Arginine biosynthesis bifunctional protein ArgJ, mitochondrial from Ajellomyces capsulatus (strain H143) (Darling's disease fungus).